A 515-amino-acid polypeptide reads, in one-letter code: FADH(2)-dependent monooxygenase TftD (515 aa).

Arginine 100–alanine 104 is a binding site for substrate. FAD is bound by residues leucine 151–phenylalanine 153, glutamine 157–arginine 160, and threonine 192. Glycine 203–cysteine 204 lines the substrate pocket. Residue threonine 457–arginine 460 coordinates FAD.

It belongs to the FADH(2)-utilizing monooxygenase family. As to quaternary structure, homotetramer. The chlorophenol-4-monooxygenase is composed of an oxygenase component TftD and a reductase component TftC.

It participates in xenobiotic degradation. Its function is as follows. Oxygenase component of a two-component system that degrades 2,4,5-trichlorophenol. Uses FADH(2) supplied by TftC to oxidize 2,4,5-trichlorophenol (2,4,5-TCP) to 2,5-dichloro-p-benzoquinone, which is chemically reduced to 2,5-dichloro-p-hydroquinone (2,5-DiCHQ). Then, TftD oxidizes the latter to 5-chloro-2-hydroxy-p-benzoquinone. The polypeptide is FADH(2)-dependent monooxygenase TftD (tftD) (Burkholderia cepacia (Pseudomonas cepacia)).